We begin with the raw amino-acid sequence, 152 residues long: Transcriptional regulator MraZ (152 aa).

2 SpoVT-AbrB domains span residues A5–E52 and A81–A124.

The protein belongs to the MraZ family. Forms oligomers.

The protein localises to the cytoplasm. The protein resides in the nucleoid. This is Transcriptional regulator MraZ from Shewanella denitrificans (strain OS217 / ATCC BAA-1090 / DSM 15013).